The following is a 451-amino-acid chain: FAD-dependent monooxygenase adrH (451 aa).

3 residues coordinate FAD: Glu-39, Gly-53, and Arg-112. The active site involves Tyr-196. Residues Asp-288 and Ala-301 each coordinate FAD. Asn-385 is a glycosylation site (N-linked (GlcNAc...) asparagine). Residues Thr-426–Leu-446 traverse the membrane as a helical segment.

This sequence belongs to the paxM FAD-dependent monooxygenase family. The cofactor is FAD.

Its subcellular location is the membrane. The protein operates within secondary metabolite biosynthesis; terpenoid biosynthesis. Functionally, FAD-dependent monooxygenase; part of the gene cluster that mediates the biosynthesis of andrastins, meroterpenoid compounds that exhibit inhibitory activity against ras farnesyltransferase, suggesting that they could be promising leads for antitumor agents. The first step of the pathway is the synthesis of 3,5-dimethylorsellinic acid (DMOA) by the polyketide synthase adrD via condensation of one acetyl-CoA starter unit with 3 malonyl-CoA units and 2 methylations. DMAO is then converted to farnesyl-DMAO by the prenyltransferase adrG. The methyltransferase adrK catalyzes the methylation of the carboxyl group of farnesyl-DMAO to farnesyl-DMAO methyl ester which is further converted to epoxyfarnesyl-DMAO methyl ester by the FAD-dependent monooxygenase adrH. The terpene cyclase adrI then catalyzes the carbon skeletal rearrangement to generate the andrastin E, the first compound in the pathway having the andrastin scaffold, with the tetracyclic ring system. The post-cyclization tailoring enzymes adrF, adrE, adrJ, and adrA, are involved in the conversion of andrastin E into andrastin A. The short chain dehydrogenase adrF is responsible for the oxidation of the C-3 a hydroxyl group of andrastin E to yield the corresponding ketone, andrastin D. The ketoreductase adrE stereoselectively reduces the carbonyl moiety to reverse the stereochemistry of the C-3 position to yield andrastin F. The acetyltransferase adrJ is the acetyltransferase that attaches the acetyl group to the C-3 hydroxyl group of andrastin F to yield andrastin C. Finally, the cytochrome P450 monooxygenase adrA catalyzes two sequential oxidation reactions of the C-23 methyl group, to generate the corresponding alcohol andrastin B, and aldehyde andrastin A. In Penicillium rubens (strain ATCC 28089 / DSM 1075 / NRRL 1951 / Wisconsin 54-1255) (Penicillium chrysogenum), this protein is FAD-dependent monooxygenase adrH.